A 301-amino-acid polypeptide reads, in one-letter code: Cytochrome c biogenesis protein CcsA (301 aa).

A run of 8 helical transmembrane segments spans residues 13–33 (NNIT…GLIF), 39–59 (VFYI…IILG), 73–93 (LYES…YLEY), 97–117 (LYLI…FSTL), 146–166 (MLSY…LVLI), 209–229 (TIGF…VWAN), 236–256 (WSWD…AAYL), and 270–290 (AYLA…VNFL).

The protein belongs to the CcmF/CycK/Ccl1/NrfE/CcsA family. May interact with Ccs1.

It is found in the plastid. The protein resides in the chloroplast thylakoid membrane. In terms of biological role, required during biogenesis of c-type cytochromes (cytochrome c6 and cytochrome f) at the step of heme attachment. The sequence is that of Cytochrome c biogenesis protein CcsA from Guillardia theta (Cryptophyte).